The chain runs to 143 residues: Transcriptional regulator MraZ (143 aa).

2 consecutive SpoVT-AbrB domains span residues 5 to 47 and 76 to 119; these read EYLH…PLDE and ATEC…SQAL.

It belongs to the MraZ family. As to quaternary structure, forms oligomers.

It localises to the cytoplasm. The protein resides in the nucleoid. In Desulfitobacterium hafniense (strain Y51), this protein is Transcriptional regulator MraZ.